Here is a 321-residue protein sequence, read N- to C-terminus: tRNA dimethylallyltransferase (321 aa).

25–32 serves as a coordination point for ATP; it reads GPTASGKS. 27 to 32 lines the substrate pocket; it reads TASGKS. Residues 50-53 form an interaction with substrate tRNA region; it reads DSMQ.

Belongs to the IPP transferase family. As to quaternary structure, monomer. Requires Mg(2+) as cofactor.

It carries out the reaction adenosine(37) in tRNA + dimethylallyl diphosphate = N(6)-dimethylallyladenosine(37) in tRNA + diphosphate. Catalyzes the transfer of a dimethylallyl group onto the adenine at position 37 in tRNAs that read codons beginning with uridine, leading to the formation of N6-(dimethylallyl)adenosine (i(6)A). This Rhodopseudomonas palustris (strain ATCC BAA-98 / CGA009) protein is tRNA dimethylallyltransferase.